A 681-amino-acid chain; its full sequence is Methionine--tRNA ligase (681 aa).

The short motif at P14–H24 is the 'HIGH' region element. Zn(2+) contacts are provided by C145, C148, C158, and C161. Positions K331 to S335 match the 'KMSKS' region motif. Residue K334 coordinates ATP. Residues A579 to H681 form the tRNA-binding domain.

This sequence belongs to the class-I aminoacyl-tRNA synthetase family. MetG type 1 subfamily. In terms of assembly, homodimer. Zn(2+) serves as cofactor.

The protein resides in the cytoplasm. The catalysed reaction is tRNA(Met) + L-methionine + ATP = L-methionyl-tRNA(Met) + AMP + diphosphate. Its function is as follows. Is required not only for elongation of protein synthesis but also for the initiation of all mRNA translation through initiator tRNA(fMet) aminoacylation. This Azotobacter vinelandii (strain DJ / ATCC BAA-1303) protein is Methionine--tRNA ligase.